Reading from the N-terminus, the 695-residue chain is MKDLARYRNIGIFAHVDAGKTTTTERILKLTGQIHKTGEVHDGESTTDFMEQEAERGITIQSAAVSCFWKDHRFNVIDTPGHVDFTVEVYRSLKVLDGGIGVFCGSGGVEPQSETNWRYANDSEVARIIFVNKLDRMGADFYRVVDQTKKVLGANPLVMVLPIGIEDDFVGVVDLLTRKAFIWDDTGLPENYEITDVPADMVDKVEEYREMLIETAVEQDDDLMMAYMDGEEPSMEDIKRCIRKGTRTMDFFPTYCGSAFKNKGVQNILDAVVDYLPSPTEVDPQPLTDEEGEPNGKYAIVSPDETFKALAFKITDDRFGALTFVRIYSGTLKKGDTILNAATGKTERIGRMCEMQADDRNELTSAQAGDIIAIVGMKSNVQTGHTLCDPKDPIILEAMVFPEPVISISVTPKDKGSTEKMGLAIGKMVAEDPTFRVETDQDSGETILSGMGELHLDIKVDILKRTYGVELEVGEPQVAYRETITQEVEDSYTHKKQSGGSGQFGKIDYRIKPGEPNSGFTFSSVVVGGNVPKEFFPAIEKGFASMMESGVLAGFPVLDVEVELYDGGFHAVDSSAVAFEIAAKGAFRQSIPKAGPQLIEPIMKVDVFTPDDHVGDVIGDLNRRRGMIKDQEAGVTGVRVKADIPLSEMFGYIGSLRTMTSGRGQFSMEFSHYSPCPNNVAEKVIADTKERNAKK.

Residues 5 to 280 (ARYRNIGIFA…AVVDYLPSPT (276 aa)) enclose the tr-type G domain. GTP is bound by residues 14–21 (AHVDAGKT), 78–82 (DTPGH), and 132–135 (NKLD).

The protein belongs to the TRAFAC class translation factor GTPase superfamily. Classic translation factor GTPase family. EF-G/EF-2 subfamily.

The protein localises to the cytoplasm. In terms of biological role, catalyzes the GTP-dependent ribosomal translocation step during translation elongation. During this step, the ribosome changes from the pre-translocational (PRE) to the post-translocational (POST) state as the newly formed A-site-bound peptidyl-tRNA and P-site-bound deacylated tRNA move to the P and E sites, respectively. Catalyzes the coordinated movement of the two tRNA molecules, the mRNA and conformational changes in the ribosome. The polypeptide is Elongation factor G 1 (Pseudoalteromonas atlantica (strain T6c / ATCC BAA-1087)).